The chain runs to 216 residues: FGFR1 oncogene partner 2 homolog (216 aa).

2 coiled-coil regions span residues 33-102 (TTTL…LIMS) and 131-185 (SKEL…ITRA). A disordered region spans residues 193 to 216 (EDAAESSSHSASSVPNTDLSLRKS). Over residues 206-216 (VPNTDLSLRKS) the composition is skewed to polar residues.

This sequence belongs to the SIKE family.

It is found in the cytoplasm. The protein is FGFR1 oncogene partner 2 homolog (fgfr1op2) of Xenopus tropicalis (Western clawed frog).